The chain runs to 100 residues: Small ribosomal subunit protein uS14c (100 aa).

This sequence belongs to the universal ribosomal protein uS14 family. Part of the 30S ribosomal subunit.

The protein localises to the plastid. It is found in the chloroplast. Its function is as follows. Binds 16S rRNA, required for the assembly of 30S particles. The protein is Small ribosomal subunit protein uS14c of Physcomitrium patens (Spreading-leaved earth moss).